Here is a 496-residue protein sequence, read N- to C-terminus: Hemophilin secretion modulator (496 aa).

Residues 1-19 (MKRTLLCCLTLLSCPFLYA) form the signal peptide. Transmembrane regions (beta stranded) follow at residues 198–208 (WQGSVSAGYTY), 253–263 (DYEASLIKRYA), 268–277 (HGVALRALAF), 291–301 (TININAGYSYF), 305–315 (NQIGVSPLFEH), 327–337 (WGARAEWMHFI), 341–351 (KAFKLEAESKD), 365–374 (SSAFATFWKI), 380–389 (TFFGGLDVLD), 403–413 (QGVRLGLSKSW), 418–427 (NTTLLSSYRW), 446–455 (QNHTFVVQMP), 462–472 (MTPNLTYRYNH), and 486–495 (HNISFKLEHR).

Belongs to the Slam family.

It localises to the cell outer membrane. Functionally, part of a high affinity heme acquisition system. Mediates the secretion of the hemophilin HphA across the outer membrane into the extracellular environment. Plays a supporting role for full virulence. The sequence is that of Hemophilin secretion modulator from Acinetobacter baumannii.